Here is an 89-residue protein sequence, read N- to C-terminus: Small ribosomal subunit protein uS15 (89 aa).

The protein belongs to the universal ribosomal protein uS15 family. Part of the 30S ribosomal subunit. Forms a bridge to the 50S subunit in the 70S ribosome, contacting the 23S rRNA.

One of the primary rRNA binding proteins, it binds directly to 16S rRNA where it helps nucleate assembly of the platform of the 30S subunit by binding and bridging several RNA helices of the 16S rRNA. Its function is as follows. Forms an intersubunit bridge (bridge B4) with the 23S rRNA of the 50S subunit in the ribosome. The sequence is that of Small ribosomal subunit protein uS15 from Mesorhizobium japonicum (strain LMG 29417 / CECT 9101 / MAFF 303099) (Mesorhizobium loti (strain MAFF 303099)).